The chain runs to 433 residues: 3-phosphoshikimate 1-carboxyvinyltransferase (433 aa).

3 residues coordinate 3-phosphoshikimate: K22, S23, and R27. Position 22 (K22) interacts with phosphoenolpyruvate. Residues G94 and R122 each coordinate phosphoenolpyruvate. The 3-phosphoshikimate site is built by S168, S169, Q170, S196, D319, and K346. Residue Q170 coordinates phosphoenolpyruvate. D319 serves as the catalytic Proton acceptor. 3 residues coordinate phosphoenolpyruvate: R350, R394, and K418.

This sequence belongs to the EPSP synthase family. Monomer.

The protein resides in the cytoplasm. The enzyme catalyses 3-phosphoshikimate + phosphoenolpyruvate = 5-O-(1-carboxyvinyl)-3-phosphoshikimate + phosphate. Its pathway is metabolic intermediate biosynthesis; chorismate biosynthesis; chorismate from D-erythrose 4-phosphate and phosphoenolpyruvate: step 6/7. In terms of biological role, catalyzes the transfer of the enolpyruvyl moiety of phosphoenolpyruvate (PEP) to the 5-hydroxyl of shikimate-3-phosphate (S3P) to produce enolpyruvyl shikimate-3-phosphate and inorganic phosphate. This is 3-phosphoshikimate 1-carboxyvinyltransferase from Nitrosomonas eutropha (strain DSM 101675 / C91 / Nm57).